A 52-amino-acid polypeptide reads, in one-letter code: UPF0391 membrane protein Avin_10980 (52 aa).

The next 2 helical transmembrane spans lie at Trp-4–Ala-24 and Gly-29–Gly-49.

This sequence belongs to the UPF0391 family.

It is found in the cell membrane. In Azotobacter vinelandii (strain DJ / ATCC BAA-1303), this protein is UPF0391 membrane protein Avin_10980.